Reading from the N-terminus, the 654-residue chain is DNA ligase (654 aa).

Residues aspartate 31–aspartate 35, serine 80–leucine 81, and glutamate 109 each bind NAD(+). The N6-AMP-lysine intermediate role is filled by lysine 111. Positions 132, 166, 280, and 304 each coordinate NAD(+). The Zn(2+) site is built by cysteine 398, cysteine 401, cysteine 416, and cysteine 421. A BRCT domain is found at asparagine 579 to leucine 654.

It belongs to the NAD-dependent DNA ligase family. LigA subfamily. The cofactor is Mg(2+). It depends on Mn(2+) as a cofactor.

The enzyme catalyses NAD(+) + (deoxyribonucleotide)n-3'-hydroxyl + 5'-phospho-(deoxyribonucleotide)m = (deoxyribonucleotide)n+m + AMP + beta-nicotinamide D-nucleotide.. In terms of biological role, DNA ligase that catalyzes the formation of phosphodiester linkages between 5'-phosphoryl and 3'-hydroxyl groups in double-stranded DNA using NAD as a coenzyme and as the energy source for the reaction. It is essential for DNA replication and repair of damaged DNA. This Lactococcus lactis subsp. lactis (strain IL1403) (Streptococcus lactis) protein is DNA ligase.